The sequence spans 397 residues: Elongation factor Tu (397 aa).

The 197-residue stretch at 10-206 folds into the tr-type G domain; the sequence is KPHVNIGTIG…AVDEYIPTPE (197 aa). A G1 region spans residues 19-26; the sequence is GHIDHGKT. 19–26 provides a ligand contact to GTP; the sequence is GHIDHGKT. Threonine 26 lines the Mg(2+) pocket. Residues 62–66 are G2; that stretch reads GITIS. The G3 stretch occupies residues 83 to 86; that stretch reads DCPG. GTP contacts are provided by residues 83-87 and 138-141; these read DCPGH and NKCD. A G4 region spans residues 138 to 141; it reads NKCD. Residues 176 to 178 are G5; sequence AAF.

This sequence belongs to the TRAFAC class translation factor GTPase superfamily. Classic translation factor GTPase family. EF-Tu/EF-1A subfamily. Monomer.

The protein localises to the cytoplasm. It carries out the reaction GTP + H2O = GDP + phosphate + H(+). GTP hydrolase that promotes the GTP-dependent binding of aminoacyl-tRNA to the A-site of ribosomes during protein biosynthesis. This is Elongation factor Tu from Nocardioides sp. (strain ATCC BAA-499 / JS614).